The following is a 146-amino-acid chain: uncharacterized protein (146 aa).

This is an uncharacterized protein from Thermoproteus tenax virus 1 (strain KRA1) (TTV1).